Consider the following 428-residue polypeptide: Dihydroorotase (428 aa).

The Zn(2+) site is built by His-61 and His-63. Residues 63–65 (HLR) and Asn-95 each bind substrate. Zn(2+)-binding residues include Asp-153, His-180, and His-233. Asn-279 provides a ligand contact to substrate. Residue Asp-306 participates in Zn(2+) binding. Residue Asp-306 is part of the active site. Substrate is bound by residues His-310 and 324–325 (FG).

This sequence belongs to the metallo-dependent hydrolases superfamily. DHOase family. Class I DHOase subfamily. It depends on Zn(2+) as a cofactor.

The enzyme catalyses (S)-dihydroorotate + H2O = N-carbamoyl-L-aspartate + H(+). The protein operates within pyrimidine metabolism; UMP biosynthesis via de novo pathway; (S)-dihydroorotate from bicarbonate: step 3/3. In terms of biological role, catalyzes the reversible cyclization of carbamoyl aspartate to dihydroorotate. This is Dihydroorotase from Geobacillus kaustophilus (strain HTA426).